A 362-amino-acid chain; its full sequence is Chorismate synthase (362 aa).

R47 contributes to the NADP(+) binding site. FMN-binding positions include 124-126, G286, 301-305, and R327; these read RAS and KPTAT.

This sequence belongs to the chorismate synthase family. Homotetramer. FMNH2 serves as cofactor.

The catalysed reaction is 5-O-(1-carboxyvinyl)-3-phosphoshikimate = chorismate + phosphate. It functions in the pathway metabolic intermediate biosynthesis; chorismate biosynthesis; chorismate from D-erythrose 4-phosphate and phosphoenolpyruvate: step 7/7. In terms of biological role, catalyzes the anti-1,4-elimination of the C-3 phosphate and the C-6 proR hydrogen from 5-enolpyruvylshikimate-3-phosphate (EPSP) to yield chorismate, which is the branch point compound that serves as the starting substrate for the three terminal pathways of aromatic amino acid biosynthesis. This reaction introduces a second double bond into the aromatic ring system. The protein is Chorismate synthase of Prochlorococcus marinus (strain SARG / CCMP1375 / SS120).